The sequence spans 156 residues: MNINLTLIAQAISFAILIWFTTKFVWPYLLNAIETRQKTIADGLAAAERGKQELDMATQRSAEVVNDAKQKATSIIAQAEKRASEIVEEAKANAKAEGDRIIAGAKAEIDQEVNRAKEGLRQQVSALAVAGAEKILRKEIDAKAHADLLNAIANEL.

A helical transmembrane segment spans residues 7–29; sequence LIAQAISFAILIWFTTKFVWPYL.

It belongs to the ATPase B chain family. As to quaternary structure, F-type ATPases have 2 components, F(1) - the catalytic core - and F(0) - the membrane proton channel. F(1) has five subunits: alpha(3), beta(3), gamma(1), delta(1), epsilon(1). F(0) has three main subunits: a(1), b(2) and c(10-14). The alpha and beta chains form an alternating ring which encloses part of the gamma chain. F(1) is attached to F(0) by a central stalk formed by the gamma and epsilon chains, while a peripheral stalk is formed by the delta and b chains.

It is found in the cell inner membrane. Its function is as follows. F(1)F(0) ATP synthase produces ATP from ADP in the presence of a proton or sodium gradient. F-type ATPases consist of two structural domains, F(1) containing the extramembraneous catalytic core and F(0) containing the membrane proton channel, linked together by a central stalk and a peripheral stalk. During catalysis, ATP synthesis in the catalytic domain of F(1) is coupled via a rotary mechanism of the central stalk subunits to proton translocation. Functionally, component of the F(0) channel, it forms part of the peripheral stalk, linking F(1) to F(0). This chain is ATP synthase subunit b, found in Methylobacillus flagellatus (strain ATCC 51484 / DSM 6875 / VKM B-1610 / KT).